Here is a 264-residue protein sequence, read N- to C-terminus: uncharacterized protein (264 aa).

Positions 1–23 are cleaved as a signal peptide; the sequence is MQQWNLTISNILIGLFFCFSAQA.

This is an uncharacterized protein from Shewanella oneidensis (strain ATCC 700550 / JCM 31522 / CIP 106686 / LMG 19005 / NCIMB 14063 / MR-1).